We begin with the raw amino-acid sequence, 372 residues long: Cytochrome b (372 aa).

Helical transmembrane passes span 25-45, 69-90, 105-125, and 170-190; these read FGSMLLTCLALQTMTGFFLAI, WMMQNLHAIGASMFFICIYIHI, WLSGTTLLIILMATAFFGYVL, and FFALHFILPFTIISMSSIHIM. Heme b-binding residues include H75 and H89. H174 and H188 together coordinate heme b. Position 193 (H193) interacts with a ubiquinone. 4 consecutive transmembrane segments (helical) span residues 218–238, 280–300, 312–332, and 339–358; these read HKDMLMFTIMITMLFIIMSFT, LGGTVALVLSVTILLTMPFTH, LMQFMFWTLVATFITITWAAT, and FTSIGQVTAILYFLFFTMNP.

It belongs to the cytochrome b family. The cytochrome bc1 complex contains 3 respiratory subunits (MT-CYB, CYC1 and UQCRFS1), 2 core proteins (UQCRC1 and UQCRC2) and probably 6 low-molecular weight proteins. The cofactor is heme b.

It localises to the mitochondrion inner membrane. Component of the ubiquinol-cytochrome c reductase complex (complex III or cytochrome b-c1 complex) that is part of the mitochondrial respiratory chain. The b-c1 complex mediates electron transfer from ubiquinol to cytochrome c. Contributes to the generation of a proton gradient across the mitochondrial membrane that is then used for ATP synthesis. This is Cytochrome b (MT-CYB) from Pantherophis vulpinus (Western fox snake).